Here is a 199-residue protein sequence, read N- to C-terminus: Imidazoleglycerol-phosphate dehydratase (199 aa).

This sequence belongs to the imidazoleglycerol-phosphate dehydratase family.

It is found in the cytoplasm. The enzyme catalyses D-erythro-1-(imidazol-4-yl)glycerol 3-phosphate = 3-(imidazol-4-yl)-2-oxopropyl phosphate + H2O. It functions in the pathway amino-acid biosynthesis; L-histidine biosynthesis; L-histidine from 5-phospho-alpha-D-ribose 1-diphosphate: step 6/9. The protein is Imidazoleglycerol-phosphate dehydratase of Mesorhizobium japonicum (strain LMG 29417 / CECT 9101 / MAFF 303099) (Mesorhizobium loti (strain MAFF 303099)).